Consider the following 618-residue polypeptide: Serine--tRNA ligase, cytoplasmic (618 aa).

An L-serine-binding site is contributed by 417–419 (TSE). 448-450 (RTE) contributes to the ATP binding site. Glu-472 contacts L-serine. 536 to 539 (EVSS) lines the ATP pocket. Ser-570 lines the L-serine pocket.

The protein belongs to the class-II aminoacyl-tRNA synthetase family. Type-1 seryl-tRNA synthetase subfamily. In terms of assembly, homodimer. The tRNA molecule binds across the dimer.

The protein localises to the cytoplasm. The catalysed reaction is tRNA(Ser) + L-serine + ATP = L-seryl-tRNA(Ser) + AMP + diphosphate + H(+). The enzyme catalyses tRNA(Sec) + L-serine + ATP = L-seryl-tRNA(Sec) + AMP + diphosphate + H(+). It functions in the pathway aminoacyl-tRNA biosynthesis; selenocysteinyl-tRNA(Sec) biosynthesis; L-seryl-tRNA(Sec) from L-serine and tRNA(Sec): step 1/1. Functionally, catalyzes the attachment of serine to tRNA(Ser). Is also able to aminoacylate tRNA(Sec) with serine, to form the misacylated tRNA L-seryl-tRNA(Sec), which will be further converted into selenocysteinyl-tRNA(Sec). The sequence is that of Serine--tRNA ligase, cytoplasmic from Plasmodium falciparum (isolate 3D7).